Consider the following 576-residue polypeptide: Gamma-aminobutyric acid receptor subunit beta (576 aa).

The first 29 residues, 1-29 (MSDSMLYQTLQTCLPKSRLITLWLAFTLA), serve as a signal peptide directing secretion. Over 30–268 (MLIQEPRRHA…IQFVRSMGYY (239 aa)) the chain is Extracellular. The N-linked (GlcNAc...) asparagine glycan is linked to N56. C183 and C197 are oxidised to a cystine. A glycan (N-linked (GlcNAc...) asparagine) is linked at N251. Transmembrane regions (helical) follow at residues 269 to 289 (LIQIYIPSGLIVVISWVSFWL), 298 to 320 (VALGVTTVLTMTTLMSSTNAALP), and 330 to 350 (VYLGTCFVMVFASLLEYATVG). The Cytoplasmic segment spans residues 351-540 (YMAKRIQMRK…TPSDIDKYSR (190 aa)). Disordered regions lie at residues 372–418 (QKKQ…QTVS) and 452–507 (HDPK…GDAE). The span at 398-412 (HGHGHGHHSHGHPHV) shows a compositional bias: basic residues. Residues 475-490 (PVGPHGPGPQGPPGGP) show a composition bias toward pro residues. Residues 491–501 (PAGGGGGGAPP) are compositionally biased toward gly residues. A helical transmembrane segment spans residues 541-561 (IVFPVCFVCFNLMYWIIYLHV).

This sequence belongs to the ligand-gated ion channel (TC 1.A.9) family. Gamma-aminobutyric acid receptor (TC 1.A.9.5) subfamily. In terms of assembly, homomultimer.

The protein resides in the postsynaptic cell membrane. It localises to the cell membrane. Functionally, GABA, an inhibitory neurotransmitter, mediates neuronal inhibition by binding to the GABA receptor and opening an integral chloride channel. In Musca domestica (House fly), this protein is Gamma-aminobutyric acid receptor subunit beta.